The sequence spans 633 residues: MGIIKTLDSTISNKIAAGEVIERPQSVVKELVENAIDAKSTSITIEVEEAGLSKIKVTDNGSGILEEDLELMFRRHATSKIENEHDLFHIRSLGFRGEALASIASVSKVRVTTCHDGSIGRQIDVIDGETVNRTLAQARQGTEITVESLFYNTPARLKYVKSLHTELGKITDIINRFVISFPYIKFTLVADGRVLIASNGNGKMQEAMAVVYGMKIAQDLVEVNGRTGDYEVHGFIAKPEHTRSNRHYMSLFINGRYIKNFMLTKAILSGYHTLLPVGRYPILAINIVMDPALVDVNVHPTKQEVRLSKESQLMELIERLIKEKIWKQNLIPKVEKKKVLETFQQQKFEYDLLREHRDKTKQSDYSEQTAVNQIDEKFKEQHKTAQLDKQRVPDGESTQKTTGFISDSAAELDTTSEILPEKNESSDVIENISTDTSREKRKIPYMEIVGQVHGTYIIAQNEDGMFMIDQHAAQERIKYEYFKKQIGDVGLEMQSLLIPITVTLSKDEAINLNKINILLKDIGIHLEHFGGNDYIINDIPVWFPDNYEETVQELIDYALQHRQIDLNKFREETAIMMSCKKSIKANHYLRITDMNYLLEELAHTVEPYTCPHGRPIIIQFTTYELEKLFKRVM.

This sequence belongs to the DNA mismatch repair MutL/HexB family.

Functionally, this protein is involved in the repair of mismatches in DNA. It is required for dam-dependent methyl-directed DNA mismatch repair. May act as a 'molecular matchmaker', a protein that promotes the formation of a stable complex between two or more DNA-binding proteins in an ATP-dependent manner without itself being part of a final effector complex. In Macrococcus caseolyticus (strain JCSC5402) (Macrococcoides caseolyticum), this protein is DNA mismatch repair protein MutL.